A 330-amino-acid polypeptide reads, in one-letter code: Ketol-acid reductoisomerase (NADP(+)) (330 aa).

Residues 1–181 (MKMYYESDVN…GFTKAGVIET (181 aa)) form the KARI N-terminal Rossmann domain. NADP(+) contacts are provided by residues 24–27 (YGSQ), R47, S52, and 82–85 (DEIQ). Residue H107 is part of the active site. Residue G133 participates in NADP(+) binding. Residues 182 to 327 (TFKEETETDL…ERLRKACGLQ (146 aa)) form the KARI C-terminal knotted domain. Mg(2+)-binding residues include D190, E194, E226, and E230. Substrate is bound at residue S251.

Belongs to the ketol-acid reductoisomerase family. Mg(2+) serves as cofactor.

The enzyme catalyses (2R)-2,3-dihydroxy-3-methylbutanoate + NADP(+) = (2S)-2-acetolactate + NADPH + H(+). It carries out the reaction (2R,3R)-2,3-dihydroxy-3-methylpentanoate + NADP(+) = (S)-2-ethyl-2-hydroxy-3-oxobutanoate + NADPH + H(+). The protein operates within amino-acid biosynthesis; L-isoleucine biosynthesis; L-isoleucine from 2-oxobutanoate: step 2/4. It functions in the pathway amino-acid biosynthesis; L-valine biosynthesis; L-valine from pyruvate: step 2/4. In terms of biological role, involved in the biosynthesis of branched-chain amino acids (BCAA). Catalyzes an alkyl-migration followed by a ketol-acid reduction of (S)-2-acetolactate (S2AL) to yield (R)-2,3-dihydroxy-isovalerate. In the isomerase reaction, S2AL is rearranged via a Mg-dependent methyl migration to produce 3-hydroxy-3-methyl-2-ketobutyrate (HMKB). In the reductase reaction, this 2-ketoacid undergoes a metal-dependent reduction by NADPH to yield (R)-2,3-dihydroxy-isovalerate. This chain is Ketol-acid reductoisomerase (NADP(+)), found in Methanobrevibacter smithii (strain ATCC 35061 / DSM 861 / OCM 144 / PS).